Consider the following 136-residue polypeptide: Outer envelope pore protein 16-4, chloroplastic (136 aa).

Positions 1-59 are contains 4 beta strands; sequence MEEELLSAVPCSSLTVESVLRVATAGGLYGLCAGPRDARKIGLSGVSQASFVAKSIGRF. 4 helical membrane passes run 18-34, 56-72, 86-102, and 110-126; these read SVLR…LCAG, IGRF…VFTM, WVNA…AVAI, and VVGM…LANC.

It belongs to the Tim17/Tim22/Tim23 family. Plastid outer envelope porin OEP16 (TC 1.B.30) subfamily. Homodimer and oligomers in membrane.

The protein resides in the plastid. The protein localises to the chloroplast outer membrane. Functionally, voltage-dependent high-conductance channel with a slight cation-selectivity; selective for amino acids but excludes triosephosphates or uncharged sugars. Non-essential amino acid-selective channel protein and translocation pore for NADPH:protochlorophyllide oxidoreductase A (PORA) and possibly PORB. The sequence is that of Outer envelope pore protein 16-4, chloroplastic (OEP164) from Arabidopsis thaliana (Mouse-ear cress).